A 282-amino-acid polypeptide reads, in one-letter code: Heat stress transcription factor A-6a (282 aa).

Residues 17–111 mediate DNA binding; sequence PTAFLTKTYN…LLKNIKRRKT (95 aa). The hydrophobic repeat HR-A/B stretch occupies residues 111 to 177; sequence TSSQTQTQSL…MMMNFLLKKI (67 aa). The Bipartite nuclear localization signal signature appears at 175–190; the sequence is KKIKKPSFLQSLRKRN. Positions 261–270 match the AHA motif; that stretch reads EGIWKGFVLS.

It belongs to the HSF family. Class A subfamily. As to quaternary structure, homotrimer. Post-translationally, exhibits temperature-dependent phosphorylation.

The protein localises to the nucleus. Its function is as follows. Transcriptional activator that specifically binds DNA sequence 5'-AGAAnnTTCT-3' known as heat shock promoter elements (HSE). The polypeptide is Heat stress transcription factor A-6a (HSFA6A) (Arabidopsis thaliana (Mouse-ear cress)).